The sequence spans 397 residues: Mannonate dehydratase 2 (397 aa).

The protein belongs to the mannonate dehydratase family. Fe(2+) serves as cofactor. Mn(2+) is required as a cofactor.

The catalysed reaction is D-mannonate = 2-dehydro-3-deoxy-D-gluconate + H2O. Its pathway is carbohydrate metabolism; pentose and glucuronate interconversion. Catalyzes the dehydration of D-mannonate. In Agrobacterium fabrum (strain C58 / ATCC 33970) (Agrobacterium tumefaciens (strain C58)), this protein is Mannonate dehydratase 2 (uxuA2).